The chain runs to 180 residues: Ribosome maturation factor RimM (180 aa).

The region spanning Pro-108–Phe-180 is the PRC barrel domain.

Belongs to the RimM family. In terms of assembly, binds ribosomal protein uS19.

It is found in the cytoplasm. In terms of biological role, an accessory protein needed during the final step in the assembly of 30S ribosomal subunit, possibly for assembly of the head region. Essential for efficient processing of 16S rRNA. May be needed both before and after RbfA during the maturation of 16S rRNA. It has affinity for free ribosomal 30S subunits but not for 70S ribosomes. The protein is Ribosome maturation factor RimM of Xanthomonas euvesicatoria pv. vesicatoria (strain 85-10) (Xanthomonas campestris pv. vesicatoria).